The sequence spans 140 residues: Natriuretic peptides B (140 aa).

Residues 1-26 (MEPCAALPRALLLLLFLHLSPLGGRP) form the signal peptide. The tract at residues 71–94 (LEPLHRSHSPAEAPEAGGTPRGVL) is disordered. Cys118 and Cys134 are oxidised to a cystine.

This sequence belongs to the natriuretic peptide family. In terms of processing, the precursor molecule is proteolytically cleaved by the endoproteases FURIN or CORIN at Arg-108 to produce the brain natriuretic peptide 32. CORIN also cleaves the precursor molecule at additional residues including Arg-105, Arg-108 and possibly Lys-111. Undergoes further proteolytic cleavage by various proteases such as DPP4, MME and possibly FAP, to give rise to a variety of shorter peptides. Cleaved at Pro-110 by the prolyl endopeptidase FAP (seprase) activity (in vitro). Degraded by IDE. During IDE degradation, the resulting products initially increase the activation of NPR1 and can also stimulate NPR2 to produce cGMP before the fragments are completely degraded and inactivated by IDE (in vitro). Brain and also in atria, but at much lower levels than ANP.

The protein resides in the secreted. Cardiac hormone that plays a key role in mediating cardio-renal homeostasis. May also function as a paracrine antifibrotic factor in the heart. Acts by specifically binding and stimulating NPR1 to produce cGMP, which in turn activates effector proteins that drive various biological responses. Involved in regulating the extracellular fluid volume and maintaining the fluid-electrolyte balance through natriuresis, diuresis, vasorelaxation, and inhibition of renin and aldosterone secretion. Binds the clearance receptor NPR3. Functionally, may affect cardio-renal homeostasis. Able to promote the production of cGMP although its potency is very low compared to brain natriuretic peptide 32. The polypeptide is Natriuretic peptides B (NPPB) (Canis lupus familiaris (Dog)).